Consider the following 156-residue polypeptide: Transcription antitermination protein NusB (156 aa).

The protein belongs to the NusB family.

In terms of biological role, involved in transcription antitermination. Required for transcription of ribosomal RNA (rRNA) genes. Binds specifically to the boxA antiterminator sequence of the ribosomal RNA (rrn) operons. The sequence is that of Transcription antitermination protein NusB from Rickettsia africae (strain ESF-5).